Reading from the N-terminus, the 558-residue chain is Formate--tetrahydrofolate ligase (558 aa).

66–73 (TPAGEGKT) lines the ATP pocket.

It belongs to the formate--tetrahydrofolate ligase family.

The enzyme catalyses (6S)-5,6,7,8-tetrahydrofolate + formate + ATP = (6R)-10-formyltetrahydrofolate + ADP + phosphate. It participates in one-carbon metabolism; tetrahydrofolate interconversion. The chain is Formate--tetrahydrofolate ligase from Neisseria meningitidis serogroup C / serotype 2a (strain ATCC 700532 / DSM 15464 / FAM18).